Consider the following 407-residue polypeptide: MFLNSLDLPGQPEDSRIVVAMSGGVDSSVVAGLLKREGYNVIGITLQLYDHGAATHRVGACCAGQDIEDARRVAEMLGIPHYVLDYEKRFREAVIDPFAESYAHGETPVPCIACNQTVKFADLLATARELGADALATGHYIRSRSHGAHRALFRPLDNDRDQSYFLFATTQEQIDYLRFPLGDLPKARVREIAAEMGLVVANKHDSQDICFVPQGKYSDVIAKLRPEAANPGFIVHIDGKILGKHSGIVNYTVGQRRGIGVSTGEALYVVYLDVENARVIVGPREMLETHKLFLRDVNWLGDESLDNFPSQGIEVAVKVRSTRPPHLACLHYKEGVFSVDLLECENGVAPGQACVLYDGNGHEARILGGGFVTHSERAADIEVMLKRVLCNLETKDSVSSQLKTTAS.

Residues 20–27 and L46 contribute to the ATP site; that span reads AMSGGVDS. Residue C114 is the Nucleophile of the active site. A disulfide bridge connects residues C114 and C210. G138 contributes to the ATP binding site. The interaction with tRNA stretch occupies residues 160-162; sequence RDQ. C210 (cysteine persulfide intermediate) is an active-site residue.

This sequence belongs to the MnmA/TRMU family.

Its subcellular location is the cytoplasm. The enzyme catalyses S-sulfanyl-L-cysteinyl-[protein] + uridine(34) in tRNA + AH2 + ATP = 2-thiouridine(34) in tRNA + L-cysteinyl-[protein] + A + AMP + diphosphate + H(+). Functionally, catalyzes the 2-thiolation of uridine at the wobble position (U34) of tRNA, leading to the formation of s(2)U34. This chain is tRNA-specific 2-thiouridylase MnmA, found in Bartonella tribocorum (strain CIP 105476 / IBS 506).